The sequence spans 285 residues: MTENKAENKQTEKTEKMEVNIIIISDSAGETAFNNAQAAAVQFPDAEVNYRRYPFIVNEKKLAATLEEIEQYPNLVIVYSMLDEKLQLPIIKFAREHKARYIDILSPIIEAISQTTHMKPTGLVGANHQLTNKYFNRISAMEFAVMYDDGKDPRGFLEADVVLLGVSRTSKTPLSLLLANKGLKVANLPLVPQTHIPKEIYQIDPTKIIGLTTDPQVLNRIRRQRMISYGMDPDTAYSNMDSINAELDSAMALYKKLGCFVINVAERSIEETAALIMNHLSYEED.

G165–T172 contributes to the ADP binding site.

Belongs to the pyruvate, phosphate/water dikinase regulatory protein family. PDRP subfamily.

The enzyme catalyses N(tele)-phospho-L-histidyl/L-threonyl-[pyruvate, phosphate dikinase] + ADP = N(tele)-phospho-L-histidyl/O-phospho-L-threonyl-[pyruvate, phosphate dikinase] + AMP + H(+). The catalysed reaction is N(tele)-phospho-L-histidyl/O-phospho-L-threonyl-[pyruvate, phosphate dikinase] + phosphate + H(+) = N(tele)-phospho-L-histidyl/L-threonyl-[pyruvate, phosphate dikinase] + diphosphate. Its function is as follows. Bifunctional serine/threonine kinase and phosphorylase involved in the regulation of the pyruvate, phosphate dikinase (PPDK) by catalyzing its phosphorylation/dephosphorylation. This chain is Putative pyruvate, phosphate dikinase regulatory protein, found in Lactobacillus delbrueckii subsp. bulgaricus (strain ATCC BAA-365 / Lb-18).